Reading from the N-terminus, the 210-residue chain is LexA repressor (210 aa).

Positions 31–51 (RAEISRELGFRSPNAAEEHLK) form a DNA-binding region, H-T-H motif. Active-site for autocatalytic cleavage activity residues include Ser-126 and Lys-163.

Belongs to the peptidase S24 family. Homodimer.

It carries out the reaction Hydrolysis of Ala-|-Gly bond in repressor LexA.. Represses a number of genes involved in the response to DNA damage (SOS response), including recA and lexA. In the presence of single-stranded DNA, RecA interacts with LexA causing an autocatalytic cleavage which disrupts the DNA-binding part of LexA, leading to derepression of the SOS regulon and eventually DNA repair. The protein is LexA repressor of Actinobacillus succinogenes (strain ATCC 55618 / DSM 22257 / CCUG 43843 / 130Z).